The chain runs to 699 residues: Chitinase A1 (699 aa).

The N-terminal stretch at 1–41 (MINLNKHTAFKKTAKFFLGLSLLLSVIVPSFALQPATAEAA) is a signal peptide. The GH18 domain maps to 44 to 454 (YKIVGYYPSW…NKLKADLPTG (411 aa)). Residues 135–136 (DQ) and 162–165 (GGWT) contribute to the chitin site. E204 serves as the catalytic Proton donor. Residues Y205, 277–280 (MTYD), and W433 contribute to the chitin site. The segment at 449-471 (ADLPTGGTVPPVDTTAPSVPGNA) is disordered. The span at 452 to 465 (PTGGTVPPVDTTAP) shows a compositional bias: low complexity. Fibronectin type-III domains follow at residues 467–553 (VPGN…TAQP) and 562–647 (APTN…TAAE).

The protein belongs to the glycosyl hydrolase 18 family. Chitinase class II subfamily.

It carries out the reaction Random endo-hydrolysis of N-acetyl-beta-D-glucosaminide (1-&gt;4)-beta-linkages in chitin and chitodextrins.. The protein is Chitinase A1 (chiA1) of Niallia circulans (Bacillus circulans).